We begin with the raw amino-acid sequence, 193 residues long: Potassium-transporting ATPase KdpC subunit (193 aa).

The helical transmembrane segment at 14 to 34 threads the bilayer; that stretch reads ITFTFLVLCGLVYPLIVTGIA.

This sequence belongs to the KdpC family. In terms of assembly, the system is composed of three essential subunits: KdpA, KdpB and KdpC.

Its subcellular location is the cell membrane. Part of the high-affinity ATP-driven potassium transport (or Kdp) system, which catalyzes the hydrolysis of ATP coupled with the electrogenic transport of potassium into the cytoplasm. This subunit acts as a catalytic chaperone that increases the ATP-binding affinity of the ATP-hydrolyzing subunit KdpB by the formation of a transient KdpB/KdpC/ATP ternary complex. The sequence is that of Potassium-transporting ATPase KdpC subunit from Bacillus cereus (strain AH820).